Reading from the N-terminus, the 101-residue chain is Small ribosomal subunit protein uS14 (101 aa).

It belongs to the universal ribosomal protein uS14 family. Part of the 30S ribosomal subunit. Contacts proteins S3 and S10.

Binds 16S rRNA, required for the assembly of 30S particles and may also be responsible for determining the conformation of the 16S rRNA at the A site. This chain is Small ribosomal subunit protein uS14, found in Shewanella sp. (strain MR-4).